The chain runs to 197 residues: Elongation factor Ts (197 aa).

The tract at residues 81–84 (TDFV) is involved in Mg(2+) ion dislocation from EF-Tu.

It belongs to the EF-Ts family.

It localises to the cytoplasm. In terms of biological role, associates with the EF-Tu.GDP complex and induces the exchange of GDP to GTP. It remains bound to the aminoacyl-tRNA.EF-Tu.GTP complex up to the GTP hydrolysis stage on the ribosome. This Petrotoga mobilis (strain DSM 10674 / SJ95) protein is Elongation factor Ts.